The sequence spans 285 residues: Eukaryotic translation initiation factor 2 subunit beta (285 aa).

A disordered region spans residues 30–69 (DAAVNGKENGSGDDLFAGLKKKKKKSKSVSADAEAEKEPT). S40 carries the post-translational modification Phosphoserine. T69 carries the post-translational modification Phosphothreonine. Phosphoserine occurs at positions 80, 92, and 112. The residue at position 116 (T116) is a Phosphothreonine. S118 is modified (phosphoserine). The segment at 236–262 (CKTCKSINTELKREQSNRLFFMVCKSC) adopts a C4-type zinc-finger fold.

This sequence belongs to the eIF-2-beta/eIF-5 family. Eukaryotic translation initiation factor 2 eIF2 is a heterotrimeric complex composed of an alpha, a beta and a gamma subunit. The factors eIF-1, eIF-2, eIF-3, TIF5/eIF-5 and methionyl-tRNAi form a multifactor complex (MFC) that may bind to the 40S ribosome. Interacts with GCD6. Interacts with GCD1. Interacts with TIF5/eIF-5. Interacts with CDC123.

The protein resides in the cytoplasm. The protein localises to the cytosol. Functionally, component of the eIF2 complex that functions in the early steps of protein synthesis by forming a ternary complex with GTP and initiator tRNA. This complex binds to a 40S ribosomal subunit, followed by mRNA binding to form a 43S pre-initiation complex (43S PIC). Junction of the 60S ribosomal subunit to form the 80S initiation complex is preceded by hydrolysis of the GTP bound to eIF2 and release of an eIF2-GDP binary complex. In order for eIF2 to recycle and catalyze another round of initiation, the GDP bound to eIF2 must exchange with GTP by way of a reaction catalyzed by eIF2B. The polypeptide is Eukaryotic translation initiation factor 2 subunit beta (SUI3) (Saccharomyces cerevisiae (strain ATCC 204508 / S288c) (Baker's yeast)).